A 417-amino-acid polypeptide reads, in one-letter code: Envelope glycoprotein D (417 aa).

The first 18 residues, 1 to 18 (MQGPTLAVLGALLAVAVS), serve as a signal peptide directing secretion. Residues 19-360 (LPTPAPRVTV…APATPAAPDA (342 aa)) are Virion surface-facing. N-linked (GlcNAc...) asparagine; by host glycosylation is found at N41 and N102. Cystine bridges form between C75-C197, C114-C213, and C126-C135. A disordered region spans residues 259–355 (EESKGYEPPP…THPPPAPATP (97 aa)). The segment covering 279–292 (GDDEAREDEGETED) has biased composition (acidic residues). The chain crosses the membrane as a helical span at residues 361-389 (VPVGVGIGIAAAAIACVAAAAAGAYFVYT). The Intravirion segment spans residues 390–417 (RRRGAGPLPRKPKKLPAFGNVNYSALPG).

It belongs to the herpesviridae glycoprotein D family.

Its subcellular location is the virion membrane. Its function is as follows. Envelope glycoprotein that binds to host cell entry receptors, promoting the virus entry into host cells. May trigger fusion with host membrane, by recruiting the fusion machinery composed of gB and gH/gL. This is Envelope glycoprotein D (gD) from Bovine herpesvirus 1.2 (strain ST) (BoHV-1).